The chain runs to 51 residues: uncharacterized protein (51 aa).

To E.coli YdaF.

This is an uncharacterized protein from Escherichia coli O157:H7.